The primary structure comprises 308 residues: Glutaminase (308 aa).

7 residues coordinate substrate: Ser-66, Asn-117, Glu-161, Asn-168, Tyr-192, Tyr-244, and Val-262.

This sequence belongs to the glutaminase family. Homotetramer.

The enzyme catalyses L-glutamine + H2O = L-glutamate + NH4(+). The chain is Glutaminase from Salmonella choleraesuis (strain SC-B67).